Consider the following 165-residue polypeptide: SsrA-binding protein (165 aa).

The protein belongs to the SmpB family.

Its subcellular location is the cytoplasm. Required for rescue of stalled ribosomes mediated by trans-translation. Binds to transfer-messenger RNA (tmRNA), required for stable association of tmRNA with ribosomes. tmRNA and SmpB together mimic tRNA shape, replacing the anticodon stem-loop with SmpB. tmRNA is encoded by the ssrA gene; the 2 termini fold to resemble tRNA(Ala) and it encodes a 'tag peptide', a short internal open reading frame. During trans-translation Ala-aminoacylated tmRNA acts like a tRNA, entering the A-site of stalled ribosomes, displacing the stalled mRNA. The ribosome then switches to translate the ORF on the tmRNA; the nascent peptide is terminated with the 'tag peptide' encoded by the tmRNA and targeted for degradation. The ribosome is freed to recommence translation, which seems to be the essential function of trans-translation. The sequence is that of SsrA-binding protein from Parvibaculum lavamentivorans (strain DS-1 / DSM 13023 / NCIMB 13966).